The sequence spans 1798 residues: Laminin subunit beta-2 (1798 aa).

Positions Met1–Ala32 are cleaved as a signal peptide. In terms of domain architecture, Laminin N-terminal spans Ser43 to Asn282. N-linked (GlcNAc...) asparagine glycosylation is present at Asn248. 19 disulfides stabilise this stretch: Cys283–Cys292, Cys285–Cys310, Cys312–Cys321, Cys324–Cys344, Cys347–Cys356, Cys349–Cys374, Cys377–Cys386, Cys389–Cys407, Cys410–Cys423, Cys412–Cys438, Cys440–Cys449, Cys452–Cys467, Cys470–Cys484, Cys472–Cys491, Cys493–Cys502, Cys505–Cys519, Cys522–Cys534, Cys524–Cys541, and Cys543–Cys552. Laminin EGF-like domains are found at residues Cys283 to Lys346, Cys347 to Ser409, Cys410 to Arg469, and Cys470 to Pro521. Residue Asn368 is glycosylated (N-linked (GlcNAc...) asparagine). Residues Cys522–Cys552 enclose the Laminin EGF-like 5; truncated domain. In terms of domain architecture, Laminin IV type B spans Arg561–Tyr777. 32 disulfide bridges follow: Cys783-Cys795, Cys785-Cys802, Cys804-Cys813, Cys816-Cys828, Cys831-Cys843, Cys833-Cys850, Cys852-Cys861, Cys864-Cys874, Cys877-Cys886, Cys879-Cys893, Cys896-Cys905, Cys908-Cys924, Cys927-Cys943, Cys929-Cys954, Cys956-Cys965, Cys968-Cys983, Cys986-Cys1000, Cys988-Cys1007, Cys1010-Cys1019, Cys1022-Cys1035, Cys1038-Cys1058, Cys1040-Cys1065, Cys1067-Cys1076, Cys1079-Cys1092, Cys1095-Cys1107, Cys1097-Cys1114, Cys1116-Cys1125, Cys1128-Cys1140, Cys1143-Cys1155, Cys1145-Cys1162, Cys1164-Cys1173, and Cys1176-Cys1187. Laminin EGF-like domains follow at residues Cys783 to Ala830, Cys831 to Pro876, Cys877 to Pro926, Cys927 to Leu985, Cys986 to Arg1037, Cys1038 to Pro1094, Cys1095 to Ala1142, and Cys1143 to Pro1189. Residue Asn1085 is glycosylated (N-linked (GlcNAc...) asparagine). Residues Cys1190–Val1409 are domain II. 3 N-linked (GlcNAc...) asparagine glycosylation sites follow: Asn1249, Asn1308, and Asn1348. A coiled-coil region spans residues Ala1253–Asp1319. The interval Ser1338–Ala1364 is disordered. The span at Ser1350–Ser1363 shows a compositional bias: low complexity. The domain alpha stretch occupies residues Cys1410–Cys1442. Residues Asn1443–Gln1798 form a domain I region. Residues Ser1472 to Glu1526 adopt a coiled-coil conformation. The N-linked (GlcNAc...) asparagine glycan is linked to Asn1499. At Ser1532 the chain carries Phosphoserine; by FAM20C. Residues Val1577–Gln1790 are a coiled coil.

In terms of assembly, laminin is a complex glycoprotein, consisting of three different polypeptide chains (alpha, beta, gamma), which are bound to each other by disulfide bonds into a cross-shaped molecule comprising one long and three short arms with globules at each end. Beta-2 is a subunit of laminin-3 (laminin-121 or S-laminin), laminin-4 (laminin-221 or S-merosin), laminin-7 (laminin-321 or KS-laminin), laminin-9 (laminin-421), laminin-11 (laminin-521), laminin-14 (laminin-423) and laminin-15 (laminin-523).

It is found in the secreted. Its subcellular location is the extracellular space. The protein resides in the extracellular matrix. The protein localises to the basement membrane. Binding to cells via a high affinity receptor, laminin is thought to mediate the attachment, migration and organization of cells into tissues during embryonic development by interacting with other extracellular matrix components. In Homo sapiens (Human), this protein is Laminin subunit beta-2 (LAMB2).